Here is a 180-residue protein sequence, read N- to C-terminus: Inorganic pyrophosphatase (180 aa).

Substrate contacts are provided by Lys-30, Arg-44, and Tyr-56. Mg(2+) is bound by residues Asp-66, Asp-71, and Asp-103. Tyr-142 is a substrate binding site.

It belongs to the PPase family. As to quaternary structure, homohexamer. The cofactor is Mg(2+).

Its subcellular location is the cytoplasm. It catalyses the reaction diphosphate + H2O = 2 phosphate + H(+). Its function is as follows. Catalyzes the hydrolysis of inorganic pyrophosphate (PPi) forming two phosphate ions. This Buchnera aphidicola subsp. Schizaphis graminum (strain Sg) protein is Inorganic pyrophosphatase.